A 101-amino-acid polypeptide reads, in one-letter code: UPF0125 protein VC_0850 (101 aa).

It belongs to the UPF0125 (RnfH) family.

This chain is UPF0125 protein VC_0850, found in Vibrio cholerae serotype O1 (strain ATCC 39315 / El Tor Inaba N16961).